Reading from the N-terminus, the 383-residue chain is Acetylornithine deacetylase (383 aa).

His80 lines the Zn(2+) pocket. Asp82 is an active-site residue. Asp112 lines the Zn(2+) pocket. Glu144 is an active-site residue. Glu145, Glu169, and His355 together coordinate Zn(2+).

The protein belongs to the peptidase M20A family. ArgE subfamily. In terms of assembly, homodimer. It depends on Zn(2+) as a cofactor. The cofactor is Co(2+). Requires glutathione as cofactor.

Its subcellular location is the cytoplasm. It catalyses the reaction N(2)-acetyl-L-ornithine + H2O = L-ornithine + acetate. It participates in amino-acid biosynthesis; L-arginine biosynthesis; L-ornithine from N(2)-acetyl-L-ornithine (linear): step 1/1. Functionally, catalyzes the hydrolysis of the amide bond of N(2)-acetylated L-amino acids. Cleaves the acetyl group from N-acetyl-L-ornithine to form L-ornithine, an intermediate in L-arginine biosynthesis pathway, and a branchpoint in the synthesis of polyamines. In Salmonella typhi, this protein is Acetylornithine deacetylase.